A 541-amino-acid chain; its full sequence is Glucose-6-phosphate isomerase (541 aa).

Catalysis depends on Glu-346, which acts as the Proton donor. Active-site residues include His-377 and Lys-506.

The protein belongs to the GPI family.

Its subcellular location is the cytoplasm. The enzyme catalyses alpha-D-glucose 6-phosphate = beta-D-fructose 6-phosphate. It participates in carbohydrate biosynthesis; gluconeogenesis. The protein operates within carbohydrate degradation; glycolysis; D-glyceraldehyde 3-phosphate and glycerone phosphate from D-glucose: step 2/4. Functionally, catalyzes the reversible isomerization of glucose-6-phosphate to fructose-6-phosphate. In Rhizobium rhizogenes (strain K84 / ATCC BAA-868) (Agrobacterium radiobacter), this protein is Glucose-6-phosphate isomerase.